A 339-amino-acid chain; its full sequence is 2-deoxy-scyllo-inosamine dehydrogenase (339 aa).

Zn(2+) is bound by residues Cys-37, His-59, Cys-88, Cys-91, Cys-94, Cys-102, and Glu-143.

This sequence belongs to the zinc-containing alcohol dehydrogenase family. DOIA dehydrogenase subfamily. Zn(2+) serves as cofactor.

It catalyses the reaction 2-deoxy-scyllo-inosamine + NADP(+) = 3-amino-2,3-dideoxy-scyllo-inosose + NADPH + H(+). It carries out the reaction 2-deoxy-scyllo-inosamine + NAD(+) = 3-amino-2,3-dideoxy-scyllo-inosose + NADH + H(+). It participates in metabolic intermediate biosynthesis; 2-deoxystreptamine biosynthesis; 2-deoxystreptamine from D-glucose 6-phosphate: step 3/4. The protein operates within antibiotic biosynthesis; tobramycin biosynthesis. In terms of biological role, catalyzes the oxidation of 2-deoxy-scyllo-inosamine (DOIA) with NAD(+) or NADP(+), forming 3-amino-2,3-dideoxy-scyllo-inosose (amino-DOI). This chain is 2-deoxy-scyllo-inosamine dehydrogenase (tobE), found in Streptoalloteichus tenebrarius (strain ATCC 17920 / DSM 40477 / JCM 4838 / CBS 697.72 / NBRC 16177 / NCIMB 11028 / NRRL B-12390 / A12253. 1 / ISP 5477) (Streptomyces tenebrarius).